A 498-amino-acid chain; its full sequence is Calcitonin receptor (498 aa).

An N-terminal signal peptide occupies residues Met1–Gly29. Over Ala30 to Tyr147 the chain is Extracellular. Cystine bridges form between Cys56–Cys82, Cys73–Cys113, and Cys96–Cys135. N-linked (GlcNAc...) asparagine glycans are attached at residues Asn74, Asn126, and Asn131. The chain crosses the membrane as a helical span at residues Ile148–Ile170. Topologically, residues Phe171–Val198 are cytoplasmic. Residues Thr199–Leu219 traverse the membrane as a helical segment. Residues Val220–Cys236 are Extracellular-facing. Residues Cys236 and Cys306 are joined by a disulfide bond. Residues Lys237–Val259 form a helical membrane-spanning segment. Residues Tyr260 to Leu276 lie on the Cytoplasmic side of the membrane. Residues Trp277–Thr297 form a helical membrane-spanning segment. The Extracellular portion of the chain corresponds to Arg298–Asn313. The helical transmembrane segment at Leu314–Leu337 threads the bilayer. Residues Arg338–Lys357 are Cytoplasmic-facing. The chain crosses the membrane as a helical span at residues Ala358–Leu376. Residues Pro377–Leu384 lie on the Extracellular side of the membrane. The chain crosses the membrane as a helical span at residues Leu385 to Cys411. Residues Asn412–Ala498 are Cytoplasmic-facing.

Belongs to the G-protein coupled receptor 2 family. In terms of assembly, heterodimer of CALCR and RAMP1, RAMP2 or RAMP3; the receptor complexes function as AMYR1, AMYR2 and AMYR3 receptors, respectively, and respond to amylin/IAPP, calcitonin/CT and CGRP1 ligands. Interacts with GPRASP2.

It is found in the cell membrane. Functionally, g protein-coupled receptor activated by ligand peptides amylin (IAPP), calcitonin (CT/CALCA) and calcitonin gene-related peptide type 1 (CGRP1/CALCA). CALCR interacts with receptor-activity-modifying proteins RAMP1, 2 and 3 to form receptor complexes AMYR1, 2 and 3, respectively. IAPP, CT and CGRP1 activate CALCR and AMYRs with distinct modes of receptor activation resulting in specific phenotypes. Ligand binding causes a conformation change that triggers signaling via guanine nucleotide-binding proteins (G proteins) and modulates the activity of downstream effectors. Activates cAMP-dependent pathway. The polypeptide is Calcitonin receptor (Sus scrofa (Pig)).